A 1426-amino-acid polypeptide reads, in one-letter code: Protein RhsD (1426 aa).

The tract at residues 256–285 is disordered; that stretch reads AEEARTSSLSSSDSSRPLSASAFPDTLPGT. Residues 262 to 277 show a composition bias toward low complexity; sequence SSLSSSDSSRPLSASA. Positions 320 to 1197 are 28 X approximate tandem repeats; the sequence is YTEAGELLAV…LNEENPHHVY (878 aa). Tandem repeats lie at residues 334 to 356, 357 to 378, 379 to 421, 422 to 442, 443 to 464, 465 to 485, 486 to 506, 507 to 529, 530 to 550, 551 to 571, 572 to 592, 593 to 613, 614 to 633, 634 to 654, 655 to 675, 676 to 695, 696 to 715, 716 to 738, 739 to 762, 812 to 832, 833 to 861, 862 to 882, 883 to 905, 906 to 941, 942 to 970, 971 to 995, and 996 to 1030. Over residues 1073 to 1085 the composition is skewed to basic and acidic residues; it reads ENGEREKAQRRSL. The disordered stretch occupies residues 1073-1097; it reads ENGEREKAQRRSLAETLQQEGSENG. Repeat 28 spans residues 1173-1197; the sequence is GNTAWSAEYDEWGNQLNEENPHHVY.

It belongs to the RHS family.

Functionally, rhs elements have a nonessential function. They may play an important role in the natural ecology of the cell. The protein is Protein RhsD (rhsD) of Escherichia coli (strain K12).